We begin with the raw amino-acid sequence, 247 residues long: Type III pantothenate kinase (247 aa).

7-14 (AIGNSRWH) is a binding site for ATP. Residues Tyr91 and 95–98 (GLDR) contribute to the substrate site. The active-site Proton acceptor is the Asp97. A K(+)-binding site is contributed by Asp117. Thr120 contacts ATP. Thr172 is a substrate binding site.

The protein belongs to the type III pantothenate kinase family. Homodimer. NH4(+) is required as a cofactor. Requires K(+) as cofactor.

The protein localises to the cytoplasm. It catalyses the reaction (R)-pantothenate + ATP = (R)-4'-phosphopantothenate + ADP + H(+). The protein operates within cofactor biosynthesis; coenzyme A biosynthesis; CoA from (R)-pantothenate: step 1/5. Functionally, catalyzes the phosphorylation of pantothenate (Pan), the first step in CoA biosynthesis. The sequence is that of Type III pantothenate kinase from Synechococcus elongatus (strain ATCC 33912 / PCC 7942 / FACHB-805) (Anacystis nidulans R2).